The sequence spans 272 residues: Leucoagglutinating phytohemagglutinin (272 aa).

The signal sequence occupies residues 1 to 20 (MASSKFFTVLFLVLLTHANS). Residue Asn-32 is glycosylated (N-linked (GlcNAc...) (high mannose) asparagine). N-linked (GlcNAc...) (complex) asparagine glycosylation occurs at Asn-80.

It belongs to the leguminous lectin family. In terms of assembly, homotetramer. In terms of processing, N-glycosylated on Asn-80; contains xylose.

This insecticidal carbohydrate-binding lectin is toxic for the cowpea weevil. The sequence is that of Leucoagglutinating phytohemagglutinin (DLEC2) from Phaseolus vulgaris (Kidney bean).